Consider the following 751-residue polypeptide: Leucine-rich repeat-containing protein 56 homolog (751 aa).

Positions 1–149 (MKKSTVLDAR…IDKSRDNGQL (149 aa)) are disordered. The segment covering 13–22 (GPLPRRPQQP) has biased composition (pro residues). Composition is skewed to polar residues over residues 28-39 (RNSSQVEKNNAR) and 60-87 (HSQSQSLDTSFAPNTNTTLGSTDVNLNS). 5 LRR repeats span residues 210 to 235 (MPQLNSLKLNNSRITELRVLGTNYAN), 236 to 256 (LRRLWISNCLVSSVSGVGACA), 258 to 279 (VLEELYASFNSISDIDALTEVS), 280 to 304 (STLQVVDLEGNDIRDTDMLKRTLPQ), and 307 to 328 (KMKHLVLKGNPVASSETIVELS). 3 disordered regions span residues 430–538 (SRSH…QRQQ), 645–698 (TCTH…EKDW), and 717–751 (EAALKERVQGSKEVDGGGLEKVESEDEEDVSPVVF). Composition is skewed to polar residues over residues 456–471 (KNSQSTASSGDSTNQG) and 662–671 (QQEQPTTAGA). A compositionally biased stretch (basic and acidic residues) spans 717–738 (EAALKERVQGSKEVDGGGLEKV). Over residues 739–751 (ESEDEEDVSPVVF) the composition is skewed to acidic residues.

This sequence belongs to the LRRC56 family.

It localises to the cell projection. The protein resides in the cilium. Its subcellular location is the flagellum. In terms of biological role, required for the assembly of dynein arms in the distal portion of flagellum axoneme. This is Leucine-rich repeat-containing protein 56 homolog from Trypanosoma brucei brucei (strain 927/4 GUTat10.1).